The chain runs to 590 residues: Probable lysine-specific demethylase 4B (590 aa).

One can recognise a JmjN domain in the interval 9–51 (IKVFRPTWEEFKDFPKYVAYMESQGAHKAGLAKVVPPPEWVPR). Tyrosine 130 is a binding site for 2-oxoglutarate. Residues 140-306 (DTDQDSWNIN…YGKRAVQCTC (167 aa)) enclose the JmjC domain. Fe cation is bound by residues histidine 186 and glutamate 188. The 2-oxoglutarate site is built by asparagine 196 and lysine 204. Cysteine 232 and histidine 238 together coordinate Zn(2+). Lysine 239 contributes to the 2-oxoglutarate binding site. Histidine 274 is a binding site for Fe cation. Positions 304 and 306 each coordinate Zn(2+). 2 disordered regions span residues 372–395 (PTKA…QNPN) and 417–590 (ATDE…TASP). Positions 445–458 (EYIDDGTEDDDEEE) are enriched in acidic residues. The span at 480–494 (SKRKTNSRNNRGRSP) shows a compositional bias: basic residues. Low complexity-rich tracts occupy residues 502–513 (ISPASSTSSTSR) and 537–571 (TTSP…TPPA).

It belongs to the JHDM3 histone demethylase family. Fe(2+) is required as a cofactor.

The protein resides in the nucleus. The enzyme catalyses N(6),N(6),N(6)-trimethyl-L-lysyl(9)-[histone H3] + 2 2-oxoglutarate + 2 O2 = N(6)-methyl-L-lysyl(9)-[histone H3] + 2 formaldehyde + 2 succinate + 2 CO2. Probable histone demethylase that specifically demethylates 'Lys-9' and 'Lys-36' residues of histone H3, thereby playing a central role in histone code. Demethylation of Lys residue generates formaldehyde and succinate. This is Probable lysine-specific demethylase 4B (Kdm4B) from Drosophila melanogaster (Fruit fly).